The chain runs to 720 residues: Glutaryl-7-aminocephalosporanic-acid acylase (720 aa).

Residues 1-29 (MLRVLHRAASALVMATVIGLAPGVAFALA) form the signal peptide. Positions 188-198 (EGDPPDLADQG) are cleaved as a propeptide — spacer peptide. The active-site Nucleophile is the Ser-199. Active-site residues include His-221 and Glu-653.

This sequence belongs to the peptidase S45 family. In terms of assembly, heterodimer of a small subunit and a large subunit processed from the same precursor.

It is found in the periplasm. It catalyses the reaction (7R)-7-(4-carboxybutanamido)cephalosporanate + H2O = (7R)-7-aminocephalosporanate + glutarate. Functionally, catalyzes the deacylation of 7 beta-(4-carboxybutanamido)cephalosporanic acid (glutaryl-7-aminocephalosporanic acid or GL-7-ACA) to 7-aminocephalosporanic acid (7-ACA). Cannot efficiently use cephalosporin C (CPC), penicillin G, or ampicillin as substrates. This Brevundimonas diminuta (Pseudomonas diminuta) protein is Glutaryl-7-aminocephalosporanic-acid acylase.